The primary structure comprises 344 residues: Ribosomal RNA small subunit methyltransferase H 2 (344 aa).

S-adenosyl-L-methionine contacts are provided by residues 78 to 80, aspartate 98, phenylalanine 131, aspartate 145, and glutamine 152; that span reads GGH.

The protein belongs to the methyltransferase superfamily. RsmH family.

It localises to the cytoplasm. It catalyses the reaction cytidine(1402) in 16S rRNA + S-adenosyl-L-methionine = N(4)-methylcytidine(1402) in 16S rRNA + S-adenosyl-L-homocysteine + H(+). In terms of biological role, specifically methylates the N4 position of cytidine in position 1402 (C1402) of 16S rRNA. The chain is Ribosomal RNA small subunit methyltransferase H 2 from Acholeplasma laidlawii (strain PG-8A).